The chain runs to 365 residues: Heme A synthase (365 aa).

Helical transmembrane passes span 17–37 (AVRI…LVGG), 107–127 (VIGI…AIGP), 132–152 (ALWG…WMVA), 164–184 (VRLA…VWTL), 203–223 (AIAL…VAGL), 264–283 (QFDH…WHAI), 296–316 (GALW…LTVL), and 320–340 (PIGL…LAVL). Position 267 (H267) interacts with heme. H327 provides a ligand contact to heme.

It belongs to the COX15/CtaA family. Type 2 subfamily. As to quaternary structure, interacts with CtaB. Requires heme b as cofactor.

It is found in the cell membrane. It carries out the reaction Fe(II)-heme o + 2 A + H2O = Fe(II)-heme a + 2 AH2. The protein operates within porphyrin-containing compound metabolism; heme A biosynthesis; heme A from heme O: step 1/1. Functionally, catalyzes the conversion of heme O to heme A by two successive hydroxylations of the methyl group at C8. The first hydroxylation forms heme I, the second hydroxylation results in an unstable dihydroxymethyl group, which spontaneously dehydrates, resulting in the formyl group of heme A. This chain is Heme A synthase, found in Rhodopseudomonas palustris (strain HaA2).